A 148-amino-acid chain; its full sequence is UPF0178 protein lpp0103 (148 aa).

The protein belongs to the UPF0178 family.

The polypeptide is UPF0178 protein lpp0103 (Legionella pneumophila (strain Paris)).